Here is a 293-residue protein sequence, read N- to C-terminus: Elongation factor Ts (293 aa).

The interval 80–83 (TDFV) is involved in Mg(2+) ion dislocation from EF-Tu.

Belongs to the EF-Ts family.

Its subcellular location is the cytoplasm. Its function is as follows. Associates with the EF-Tu.GDP complex and induces the exchange of GDP to GTP. It remains bound to the aminoacyl-tRNA.EF-Tu.GTP complex up to the GTP hydrolysis stage on the ribosome. In Burkholderia vietnamiensis (strain G4 / LMG 22486) (Burkholderia cepacia (strain R1808)), this protein is Elongation factor Ts.